We begin with the raw amino-acid sequence, 499 residues long: Zinc finger protein PLAG1 (499 aa).

The disordered stretch occupies residues 1 to 33 (MATVIPGDLSEVRDTQKAPSGKRKRGESKPRKN). Residues 2–84 (ATVIPGDLSE…SKYKLQRHMA (83 aa)) form an interaction with KPNA2 region. The Nuclear localization signal signature appears at 22–25 (KRKR). C2H2-type zinc fingers lie at residues 34-56 (FPCQ…SFSH), 62-86 (YKCT…MATH), 92-114 (HKCN…LHTH), 121-143 (FKCE…LALH), 150-172 (LTCK…LKSH), 185-207 (HQCE…MVVH), and 213-236 (FLCQ…KKSH). Residues 41 to 242 (KAFNSVEKLK…KKSHNQELLK (202 aa)) form a decreased nuclear import with localization in the nucleus but also in the cytoplasm region. The interval 243–383 (VKTEPVDFLD…SPASSSKLGL (141 aa)) is repression domain; contains 3 sumoylation motifs and massively decrease transcription activity. Residues 243 to 499 (VKTEPVDFLD…TLPRFHQAFQ (257 aa)) are activates transcription; Inhibition of nuclear import due to lack of NLS and KPNA2 interaction. Residues K244 and K263 each participate in a glycyl lysine isopeptide (Lys-Gly) (interchain with G-Cter in SUMO) cross-link. A compositionally biased stretch (low complexity) spans 365–379 (GGAPSSSQDSPASSS). Residues 365-400 (GGAPSSSQDSPASSSKLGLEPQSGSPDDGAGDLSLS) form a disordered region. Positions 384-499 (EPQSGSPDDG…TLPRFHQAFQ (116 aa)) are massively activates transcription.

This sequence belongs to the krueppel C2H2-type zinc-finger protein family. In terms of assembly, interacts with KPNA2, which escorts protein to the nucleus via interaction with nuclear localization signal. Interacts with E3 SUMO-protein ligase PIAS1, PIAS2 and PIAS4. Post-translationally, sumoylated with SUMO1; which inhibits transcriptional activity, but does not affect nuclear localization. Blockers of sumoylation pathway such as SENP3 and inactive UBE2I increases transcriptional capacity. Sumoylation is increased in the presence of PIAS1. Acetylated by lysine acetyltransferase EP300; which activates transcriptional capacity. Lysine residues that are sumoylated also seem to be target for acetylation. Expressed in heart, spleen, lung, kidney, brain, testis and epididymis but not in salivary glands.

The protein resides in the nucleus. Its function is as follows. Transcription factor whose activation results in up-regulation of target genes, such as IGFII, leading to uncontrolled cell proliferation: when overexpressed in cultured cells, higher proliferation rate and transformation are observed. Other target genes such as CRLF1, CRABP2, CRIP2, PIGF are strongly induced in cells with PLAG1 induction. Proto-oncogene whose ectopic expression can trigger the development of pleomorphic adenomas of the salivary gland and lipoblastomas. Cooperates with CBFB-MYH11. The polypeptide is Zinc finger protein PLAG1 (Plag1) (Mus musculus (Mouse)).